The chain runs to 344 residues: Glycerol-3-phosphate dehydrogenase [NAD(P)+] (344 aa).

Serine 11, tryptophan 12, histidine 32, arginine 33, and lysine 105 together coordinate NADPH. 3 residues coordinate sn-glycerol 3-phosphate: lysine 105, glycine 135, and serine 137. Alanine 139 is a binding site for NADPH. 5 residues coordinate sn-glycerol 3-phosphate: lysine 190, aspartate 243, serine 253, arginine 254, and asparagine 255. Lysine 190 acts as the Proton acceptor in catalysis. Arginine 254 is a binding site for NADPH. NADPH is bound by residues valine 278 and glutamate 280.

The protein belongs to the NAD-dependent glycerol-3-phosphate dehydrogenase family.

Its subcellular location is the cytoplasm. The catalysed reaction is sn-glycerol 3-phosphate + NAD(+) = dihydroxyacetone phosphate + NADH + H(+). It carries out the reaction sn-glycerol 3-phosphate + NADP(+) = dihydroxyacetone phosphate + NADPH + H(+). The protein operates within membrane lipid metabolism; glycerophospholipid metabolism. Its function is as follows. Catalyzes the reduction of the glycolytic intermediate dihydroxyacetone phosphate (DHAP) to sn-glycerol 3-phosphate (G3P), the key precursor for phospholipid synthesis. This Oceanobacillus iheyensis (strain DSM 14371 / CIP 107618 / JCM 11309 / KCTC 3954 / HTE831) protein is Glycerol-3-phosphate dehydrogenase [NAD(P)+].